Reading from the N-terminus, the 229-residue chain is 2,3-bisphosphoglycerate-dependent phosphoglycerate mutase 2 (229 aa).

Residues 8-15 (RHGQSEWN), 21-22 (TG), Arg-60, 87-90 (ERHY), Lys-98, 114-115 (RR), and 183-184 (GN) contribute to the substrate site. Residue His-9 is the Tele-phosphohistidine intermediate of the active site. Catalysis depends on Glu-87, which acts as the Proton donor/acceptor.

The protein belongs to the phosphoglycerate mutase family. BPG-dependent PGAM subfamily.

It catalyses the reaction (2R)-2-phosphoglycerate = (2R)-3-phosphoglycerate. It functions in the pathway carbohydrate degradation; glycolysis; pyruvate from D-glyceraldehyde 3-phosphate: step 3/5. Functionally, catalyzes the interconversion of 2-phosphoglycerate and 3-phosphoglycerate. The polypeptide is 2,3-bisphosphoglycerate-dependent phosphoglycerate mutase 2 (Latilactobacillus sakei subsp. sakei (strain 23K) (Lactobacillus sakei subsp. sakei)).